A 161-amino-acid polypeptide reads, in one-letter code: DNA-directed RNA polymerase 18 kDa subunit (161 aa).

It belongs to the poxviridae DNA-directed RNA polymerase 18 kDa subunit family. In terms of assembly, the DNA-dependent RNA polymerase used for intermediate and late genes expression consists of eight subunits Rpo30/OPG66, Rpo7/OPG90, Rpo22/OPG103, Rpo147/OPG105, Rpo18/OPG119, Rpo19/OPG131, Rpo132/OPG151 and Rpo35/OPG156. The same holoenzyme, with the addition of the transcription-specificity factor OPG109, is used for early gene expression. In terms of processing, apparently non-glycosylated.

It localises to the virion. The catalysed reaction is RNA(n) + a ribonucleoside 5'-triphosphate = RNA(n+1) + diphosphate. Functionally, part of the DNA-dependent RNA polymerase which catalyzes the transcription of viral DNA into RNA using the four ribonucleoside triphosphates as substrates. Responsible for the transcription of early, intermediate and late genes. DNA-dependent RNA polymerase associates with the early transcription factor (ETF), itself composed of OPG118 and OPG133, thereby allowing the early genes transcription. Late transcription, and probably also intermediate transcription, require newly synthesized RNA polymerase. The polypeptide is DNA-directed RNA polymerase 18 kDa subunit (OPG119) (Cynomys gunnisoni (Gunnison's prairie dog)).